Consider the following 397-residue polypeptide: Phosphoglycerate kinase (397 aa).

Residues 21–23 (DVN), Arg-36, 59–62 (HFGR), Arg-119, and Arg-152 contribute to the substrate site. ATP is bound by residues Lys-202, Glu-324, and 354–357 (GGDT).

The protein belongs to the phosphoglycerate kinase family. Monomer.

The protein localises to the cytoplasm. It catalyses the reaction (2R)-3-phosphoglycerate + ATP = (2R)-3-phospho-glyceroyl phosphate + ADP. It participates in carbohydrate degradation; glycolysis; pyruvate from D-glyceraldehyde 3-phosphate: step 2/5. The sequence is that of Phosphoglycerate kinase from Cereibacter sphaeroides (strain ATCC 17025 / ATH 2.4.3) (Rhodobacter sphaeroides).